Here is a 401-residue protein sequence, read N- to C-terminus: S-adenosylmethionine synthase (401 aa).

136-141 (GQGSVD) is a binding site for ATP.

The protein belongs to the AdoMet synthase 2 family. Mg(2+) serves as cofactor.

The catalysed reaction is L-methionine + ATP + H2O = S-adenosyl-L-methionine + phosphate + diphosphate. Its pathway is amino-acid biosynthesis; S-adenosyl-L-methionine biosynthesis; S-adenosyl-L-methionine from L-methionine: step 1/1. In terms of biological role, catalyzes the formation of S-adenosylmethionine from methionine and ATP. In Pyrococcus furiosus (strain ATCC 43587 / DSM 3638 / JCM 8422 / Vc1), this protein is S-adenosylmethionine synthase.